Consider the following 852-residue polypeptide: MLISQSWLTRILQTSNPQWSVSAEEFDAGFVRVGFETEGYEAIPETTGPLVIGRVEKIEELTEFKKPIRYCDVNVGQANGTGELQHIICGARNFAEGDNVVIALPGTVLPGPFEISARKTYGKISEGMICSAMEVGLASQQNPGIMTISDADLASANLKVGDDARELLGLQDTIFDVNITPDRGYALSARGLARELASSFDLQFRDPAQDPAAAAMRNDLFAGLPGTDGEVQALKVDEDTKCSKFGMRKVTGIDPQAESPLWLQRELMLCGQRPVNPATDVTNYVMFLLGQPMHAFDADKVTGELHVRLAKKGEKLTTLDDVERTLDPEDVVISDESGIQSLAGVMGGSTSEISEATTNVLFEAAHWDQITVARTCRRHKLSSEASRRFERGTDAAIIEDALDFAVALLVNIAGGQVEEGRTLVGAVPEMPMITIHTSLPGKTAGKIYPDGTTISRLREVGCEVRETGSRDDNGAREIEVTPPTWRPDLTMPADLVEEVLRLEGLEDIPSIVPTAPAGRGYTPRQRMRRNVGQALAWAGYAEILPTPFIANDVFDVWDLPADDPRRLTVKVQNPLESDYACIGTTLLPSMIESLRRNVTRGQRDAALYGVEQVSVPKSAKPFSPMPSVKQRPGAEELQELLDSLPAQPLHVAVVATGNRQLQGTWGEPEAFTAADAIESARVVARAAGVEITVRNAEYLPWHPGRCAEILVGDKVVGHAGELHPQVCERAELPPRTVAMEMNLDALPLEETFPRPVLSAFPAVLQDIAVVVDEATPAQDVEDALRAGAGELLEEIRLFDVYHSESLGEGKRSLTFSLRFRAPDRTLTEEEASKSREAALQFATEKVGAQLRA.

A tRNA-binding domain is found at 44-159; the sequence is PETTGPLVIG…DADLASANLK (116 aa). The B5 domain occupies 428-510; the sequence is PEMPMITIHT…RLEGLEDIPS (83 aa). Aspartate 488, aspartate 494, glutamate 497, and glutamate 498 together coordinate Mg(2+). One can recognise an FDX-ACB domain in the interval 758-851; that stretch reads SAFPAVLQDI…ATEKVGAQLR (94 aa).

It belongs to the phenylalanyl-tRNA synthetase beta subunit family. Type 1 subfamily. In terms of assembly, tetramer of two alpha and two beta subunits. Mg(2+) is required as a cofactor.

The protein localises to the cytoplasm. The catalysed reaction is tRNA(Phe) + L-phenylalanine + ATP = L-phenylalanyl-tRNA(Phe) + AMP + diphosphate + H(+). In Corynebacterium jeikeium (strain K411), this protein is Phenylalanine--tRNA ligase beta subunit.